The primary structure comprises 253 residues: Isopentenyl-diphosphate delta-isomerase IDI1 (253 aa).

Lys-61 serves as a coordination point for substrate. 2 residues coordinate Mg(2+): His-65 and His-76. Residues 74-224 form the Nudix hydrolase domain; it reads LLHRAFSVFL…SLVFTPWFKL (151 aa). Substrate-binding residues include Gln-94 and Lys-99. Cys-111 is a catalytic residue. Position 112 (Ser-112) interacts with substrate. The short motif at 112–145 is the Nudix box element; sequence SHPLHIPTETGSTLEDSIAGVKRAAQRKLEHELG. Residues Glu-174 and Glu-176 each coordinate Mg(2+). Glu-176 is a catalytic residue.

This sequence belongs to the IPP isomerase type 1 family. Requires Mg(2+) as cofactor.

It catalyses the reaction isopentenyl diphosphate = dimethylallyl diphosphate. It participates in isoprenoid biosynthesis; dimethylallyl diphosphate biosynthesis; dimethylallyl diphosphate from isopentenyl diphosphate: step 1/1. In terms of biological role, isopentenyl-diphosphate delta-isomerase; part of the second module of ergosterol biosynthesis pathway that includes the middle steps of the pathway. IDI1 catalyzes the 1,3-allylic rearrangement of isopentenyl (IPP) to its highly electrophilic allylic isomer, dimethylallyl diphosphate (DMAPP). The second module is carried out in the vacuole and involves the formation of farnesyl diphosphate, which is also an important intermediate in the biosynthesis of ubiquinone, dolichol, heme and prenylated proteins. Activity by the mevalonate kinase ERG12 (FG05912) first converts mevalonate into 5-phosphomevalonate. 5-phosphomevalonate is then further converted to 5-diphosphomevalonate by the phosphomevalonate kinase ERG8 (FG09764). The diphosphomevalonate decarboxylase ERG19 (FG10424) then produces isopentenyl diphosphate. The isopentenyl-diphosphate delta-isomerase IDI1 (FG09722) then catalyzes the 1,3-allylic rearrangement of the homoallylic substrate isopentenyl (IPP) to its highly electrophilic allylic isomer, dimethylallyl diphosphate (DMAPP). Finally the farnesyl diphosphate synthase ERG20 (FG06784) catalyzes the sequential condensation of isopentenyl pyrophosphate with dimethylallyl pyrophosphate, and then with the resultant geranylpyrophosphate to the ultimate product farnesyl pyrophosphate. This is Isopentenyl-diphosphate delta-isomerase IDI1 from Gibberella zeae (strain ATCC MYA-4620 / CBS 123657 / FGSC 9075 / NRRL 31084 / PH-1) (Wheat head blight fungus).